Here is a 296-residue protein sequence, read N- to C-terminus: Pyridoxine/pyridoxal/pyridoxamine kinase (296 aa).

Residues S23 and H59 each coordinate substrate. D125 serves as a coordination point for ATP. Y136 contacts Mg(2+). Residues T157, E162, T195, 222–225 (HQRV), and T232 each bind ATP. E162 is a binding site for Mg(2+). Substrate is bound at residue D234.

Belongs to the pyridoxine kinase family. PdxK subfamily. In terms of assembly, homodimer. Requires Mg(2+) as cofactor.

It catalyses the reaction pyridoxal + ATP = pyridoxal 5'-phosphate + ADP + H(+). It carries out the reaction pyridoxine + ATP = pyridoxine 5'-phosphate + ADP + H(+). The catalysed reaction is pyridoxamine + ATP = pyridoxamine 5'-phosphate + ADP + H(+). Its pathway is cofactor metabolism; pyridoxal 5'-phosphate salvage; pyridoxal 5'-phosphate from pyridoxal: step 1/1. The protein operates within cofactor metabolism; pyridoxal 5'-phosphate salvage; pyridoxine 5'-phosphate from pyridoxine: step 1/1. It functions in the pathway cofactor metabolism; pyridoxal 5'-phosphate salvage; pyridoxamine 5'-phosphate from pyridoxamine: step 1/1. In terms of biological role, B6-vitamer kinase involved in the salvage pathway of pyridoxal 5'-phosphate (PLP). Catalyzes the phosphorylation of pyridoxine (PN), pyridoxal (PL), and pyridoxamine (PM), forming their respective 5'-phosphorylated esters, i.e. PNP, PLP and PMP. The sequence is that of Pyridoxine/pyridoxal/pyridoxamine kinase from Bordetella avium (strain 197N).